We begin with the raw amino-acid sequence, 71 residues long: Prophage lysis protein S homolog EssQ (71 aa).

This sequence belongs to the lambda phage S protein family.

The protein is Prophage lysis protein S homolog EssQ (essQ) of Escherichia coli (strain K12).